Here is a 194-residue protein sequence, read N- to C-terminus: Flagellar transcriptional regulator FlhC (194 aa).

Positions 139, 142, 159, and 162 each coordinate Zn(2+).

This sequence belongs to the FlhC family. As to quaternary structure, heterohexamer composed of two FlhC and four FlhD subunits. Each FlhC binds a FlhD dimer, forming a heterotrimer, and a hexamer assembles by dimerization of two heterotrimers. Requires Zn(2+) as cofactor.

The protein resides in the cytoplasm. Its function is as follows. Functions in complex with FlhD as a master transcriptional regulator that regulates transcription of several flagellar and non-flagellar operons by binding to their promoter region. Activates expression of class 2 flagellar genes, including fliA, which is a flagellum-specific sigma factor that turns on the class 3 genes. Also regulates genes whose products function in a variety of physiological pathways. This chain is Flagellar transcriptional regulator FlhC, found in Xenorhabdus nematophila (Achromobacter nematophilus).